The sequence spans 265 residues: MKVERVLLKDYTTLGVGGPAELWTVETREELKRATEAPYRVLGNGSNLLVLDEGVPERVIRLAGEFQTYDLKGWVGAGTLLPLLVQEAARAGLSGLEGLLGIPAQVGGAVKMNAGTRFGEMADALEAVEVFHDGAFHVYCPEELGFGYRKSHLPPGGIVTRVRLKLKERPKEEILRRMAEVDRARKGQPKRKSAGCAFKNPPGQSAGRLIDERGLKGLRVGDAMISLEHGNFIVNLGQARAKDVLELVRRVQEELPLELEWEVWP.

In terms of domain architecture, FAD-binding PCMH-type spans 15–169 (GVGGPAELWT…TRVRLKLKER (155 aa)). Arg-149 is an active-site residue. Residues 182–203 (DRARKGQPKRKSAGCAFKNPPG) are disordered. Cys-196 functions as the Proton donor in the catalytic mechanism.

This sequence belongs to the MurB family. It depends on FAD as a cofactor.

It localises to the cytoplasm. It carries out the reaction UDP-N-acetyl-alpha-D-muramate + NADP(+) = UDP-N-acetyl-3-O-(1-carboxyvinyl)-alpha-D-glucosamine + NADPH + H(+). Its pathway is cell wall biogenesis; peptidoglycan biosynthesis. Functionally, cell wall formation. The sequence is that of UDP-N-acetylenolpyruvoylglucosamine reductase from Thermus thermophilus (strain ATCC BAA-163 / DSM 7039 / HB27).